Reading from the N-terminus, the 340-residue chain is Alcohol dehydrogenase (340 aa).

Zn(2+) contacts are provided by C37, H58, C89, C92, C95, C103, and C145.

Belongs to the zinc-containing alcohol dehydrogenase family. It depends on Zn(2+) as a cofactor.

It carries out the reaction a primary alcohol + NAD(+) = an aldehyde + NADH + H(+). It catalyses the reaction a secondary alcohol + NAD(+) = a ketone + NADH + H(+). In Staphylococcus epidermidis (strain ATCC 12228 / FDA PCI 1200), this protein is Alcohol dehydrogenase (adh).